The sequence spans 101 residues: NAD(P)H-quinone oxidoreductase subunit 4L, chloroplastic (101 aa).

The next 3 membrane-spanning stretches (helical) occupy residues 2-22, 32-52, and 61-81; these read MLEH…YGLI, MCLE…SDFF, and IFSI…PAIV.

This sequence belongs to the complex I subunit 4L family. In terms of assembly, NDH is composed of at least 16 different subunits, 5 of which are encoded in the nucleus.

The protein resides in the plastid. Its subcellular location is the chloroplast thylakoid membrane. It carries out the reaction a plastoquinone + NADH + (n+1) H(+)(in) = a plastoquinol + NAD(+) + n H(+)(out). It catalyses the reaction a plastoquinone + NADPH + (n+1) H(+)(in) = a plastoquinol + NADP(+) + n H(+)(out). Functionally, NDH shuttles electrons from NAD(P)H:plastoquinone, via FMN and iron-sulfur (Fe-S) centers, to quinones in the photosynthetic chain and possibly in a chloroplast respiratory chain. The immediate electron acceptor for the enzyme in this species is believed to be plastoquinone. Couples the redox reaction to proton translocation, and thus conserves the redox energy in a proton gradient. This Lotus japonicus (Lotus corniculatus var. japonicus) protein is NAD(P)H-quinone oxidoreductase subunit 4L, chloroplastic.